The primary structure comprises 326 residues: Biotin synthase (326 aa).

The Radical SAM core domain occupies 48 to 277 (FGAGKVDLCS…SARIRMAGGR (230 aa)). Residues Cys66, Cys70, and Cys73 each contribute to the [4Fe-4S] cluster site. [2Fe-2S] cluster contacts are provided by Ser110, Cys142, Cys202, and Arg272.

The protein belongs to the radical SAM superfamily. Biotin synthase family. Homodimer. The cofactor is [4Fe-4S] cluster. It depends on [2Fe-2S] cluster as a cofactor.

It carries out the reaction (4R,5S)-dethiobiotin + (sulfur carrier)-SH + 2 reduced [2Fe-2S]-[ferredoxin] + 2 S-adenosyl-L-methionine = (sulfur carrier)-H + biotin + 2 5'-deoxyadenosine + 2 L-methionine + 2 oxidized [2Fe-2S]-[ferredoxin]. The protein operates within cofactor biosynthesis; biotin biosynthesis; biotin from 7,8-diaminononanoate: step 2/2. Catalyzes the conversion of dethiobiotin (DTB) to biotin by the insertion of a sulfur atom into dethiobiotin via a radical-based mechanism. The polypeptide is Biotin synthase (Heliobacterium modesticaldum (strain ATCC 51547 / Ice1)).